A 61-amino-acid polypeptide reads, in one-letter code: Venom protein 22.1 (61 aa).

Residues 1–18 form the signal peptide; that stretch reads MDIKGLLVILFFVLLITG.

It belongs to the non-disulfide-bridged peptide (NDBP) superfamily. Long chain multifunctional peptide (group 2) family. As to expression, expressed by the venom gland.

Its subcellular location is the secreted. The polypeptide is Venom protein 22.1 (Lychas mucronatus (Chinese swimming scorpion)).